Consider the following 382-residue polypeptide: Mannitol-1-phosphate 5-dehydrogenase (382 aa).

An NAD(+)-binding site is contributed by 3 to 14 (AVHFGAGNIGRG).

The protein belongs to the mannitol dehydrogenase family.

It carries out the reaction D-mannitol 1-phosphate + NAD(+) = beta-D-fructose 6-phosphate + NADH + H(+). The sequence is that of Mannitol-1-phosphate 5-dehydrogenase from Paenarthrobacter aurescens (strain TC1).